We begin with the raw amino-acid sequence, 232 residues long: MEESLLSIIVALDAKSQYDALKIVEQLDPTLCRVKVGKELFTHEGPSVVKKLQEENFEVFLDLKFHDIPNTTAQAVCAAADLGVWMVNVHASGGRKMMETCVERLKAGNYQTQLIAVTVLTSMGREDLKDIGLDIEPVEQVKRLAKLTKESGLDGVVCSAQEAKILRELIGQDFSLVTPGIRPEGSNADDQKRIVTPKQAMLDGSTHLVIGRPITKAENPTEMLKSILASIA.

Substrate-binding positions include D13, K35, 62–71 (DLKFHDIPNT), T121, R182, Q191, G211, and R212. Residue K64 is the Proton donor of the active site.

This sequence belongs to the OMP decarboxylase family. Type 1 subfamily. Homodimer.

It catalyses the reaction orotidine 5'-phosphate + H(+) = UMP + CO2. The protein operates within pyrimidine metabolism; UMP biosynthesis via de novo pathway; UMP from orotate: step 2/2. Catalyzes the decarboxylation of orotidine 5'-monophosphate (OMP) to uridine 5'-monophosphate (UMP). In Acinetobacter baumannii (strain ACICU), this protein is Orotidine 5'-phosphate decarboxylase.